Consider the following 504-residue polypeptide: Maturase K (504 aa).

The protein belongs to the intron maturase 2 family. MatK subfamily.

The protein resides in the plastid. Its subcellular location is the chloroplast. Usually encoded in the trnK tRNA gene intron. Probably assists in splicing its own and other chloroplast group II introns. The polypeptide is Maturase K (Guizotia abyssinica (Niger)).